The sequence spans 180 residues: NADH-quinone oxidoreductase subunit I (180 aa).

4Fe-4S ferredoxin-type domains lie at 48 to 80 (IVLT…LQKA) and 90 to 119 (EFFR…LTPD). Residues C60, C63, C66, C70, C99, C102, C105, and C109 each coordinate [4Fe-4S] cluster. Positions 160–180 (GKPKGSAQKEAAPIDVKSILP) are disordered.

This sequence belongs to the complex I 23 kDa subunit family. NDH-1 is composed of 14 different subunits. Subunits NuoA, H, J, K, L, M, N constitute the membrane sector of the complex. The cofactor is [4Fe-4S] cluster.

It is found in the cell inner membrane. It catalyses the reaction a quinone + NADH + 5 H(+)(in) = a quinol + NAD(+) + 4 H(+)(out). Its function is as follows. NDH-1 shuttles electrons from NADH, via FMN and iron-sulfur (Fe-S) centers, to quinones in the respiratory chain. The immediate electron acceptor for the enzyme in this species is believed to be ubiquinone. Couples the redox reaction to proton translocation (for every two electrons transferred, four hydrogen ions are translocated across the cytoplasmic membrane), and thus conserves the redox energy in a proton gradient. The chain is NADH-quinone oxidoreductase subunit I from Tolumonas auensis (strain DSM 9187 / NBRC 110442 / TA 4).